The sequence spans 195 residues: Recombination protein RecR (195 aa).

The C4-type zinc finger occupies 54 to 69 (CTICGSYTEDEICSIC). Residues 77–172 (ATICVVGFPQ…NITRLASGLP (96 aa)) enclose the Toprim domain.

Belongs to the RecR family.

May play a role in DNA repair. It seems to be involved in an RecBC-independent recombinational process of DNA repair. It may act with RecF and RecO. The chain is Recombination protein RecR from Treponema denticola (strain ATCC 35405 / DSM 14222 / CIP 103919 / JCM 8153 / KCTC 15104).